A 408-amino-acid chain; its full sequence is LL-diaminopimelate aminotransferase (408 aa).

Substrate is bound by residues Tyr15 and Gly42. Pyridoxal 5'-phosphate-binding positions include Tyr72, 108–109 (SK), Tyr132, Asn187, Tyr218, and 246–248 (SFS). Positions 109, 132, and 187 each coordinate substrate. An N6-(pyridoxal phosphate)lysine modification is found at Lys249. Pyridoxal 5'-phosphate is bound by residues Arg257 and Asn292. Substrate-binding residues include Asn292 and Arg388.

It belongs to the class-I pyridoxal-phosphate-dependent aminotransferase family. LL-diaminopimelate aminotransferase subfamily. Homodimer. The cofactor is pyridoxal 5'-phosphate.

The catalysed reaction is (2S,6S)-2,6-diaminopimelate + 2-oxoglutarate = (S)-2,3,4,5-tetrahydrodipicolinate + L-glutamate + H2O + H(+). It participates in amino-acid biosynthesis; L-lysine biosynthesis via DAP pathway; LL-2,6-diaminopimelate from (S)-tetrahydrodipicolinate (aminotransferase route): step 1/1. Functionally, involved in the synthesis of meso-diaminopimelate (m-DAP or DL-DAP), required for both lysine and peptidoglycan biosynthesis. Catalyzes the direct conversion of tetrahydrodipicolinate to LL-diaminopimelate. The sequence is that of LL-diaminopimelate aminotransferase from Prochlorococcus marinus (strain SARG / CCMP1375 / SS120).